The sequence spans 475 residues: Ribulose bisphosphate carboxylase large chain (475 aa).

Positions 1–2 (MS) are excised as a propeptide. Residue P3 is modified to N-acetylproline. K14 carries the post-translational modification N6,N6,N6-trimethyllysine. Residues N123 and T173 each coordinate substrate. K175 serves as the catalytic Proton acceptor. A substrate-binding site is contributed by K177. Mg(2+)-binding residues include K201, D203, and E204. K201 bears the N6-carboxylysine mark. The active-site Proton acceptor is H294. Substrate is bound by residues H327 and S379.

It belongs to the RuBisCO large chain family. Type I subfamily. Heterohexadecamer of 8 large chains and 8 small chains; disulfide-linked. The disulfide link is formed within the large subunit homodimers. The cofactor is Mg(2+). The disulfide bond which can form in the large chain dimeric partners within the hexadecamer appears to be associated with oxidative stress and protein turnover.

The protein resides in the plastid. It is found in the chloroplast. It carries out the reaction 2 (2R)-3-phosphoglycerate + 2 H(+) = D-ribulose 1,5-bisphosphate + CO2 + H2O. It catalyses the reaction D-ribulose 1,5-bisphosphate + O2 = 2-phosphoglycolate + (2R)-3-phosphoglycerate + 2 H(+). Its function is as follows. RuBisCO catalyzes two reactions: the carboxylation of D-ribulose 1,5-bisphosphate, the primary event in carbon dioxide fixation, as well as the oxidative fragmentation of the pentose substrate in the photorespiration process. Both reactions occur simultaneously and in competition at the same active site. This Amaranthus hypochondriacus (Prince-of-Wales feather) protein is Ribulose bisphosphate carboxylase large chain.